We begin with the raw amino-acid sequence, 635 residues long: Threonine--tRNA ligase (635 aa).

The TGS domain maps to 1-61; the sequence is MTVVRLPDGT…ETDSDLVLIT (61 aa). Positions 242-533 are catalytic; that stretch reads DHRKLGKQLD…LIEHHAGALP (292 aa). Positions 333, 384, and 510 each coordinate Zn(2+).

Belongs to the class-II aminoacyl-tRNA synthetase family. As to quaternary structure, homodimer. It depends on Zn(2+) as a cofactor.

The protein resides in the cytoplasm. The catalysed reaction is tRNA(Thr) + L-threonine + ATP = L-threonyl-tRNA(Thr) + AMP + diphosphate + H(+). Functionally, catalyzes the attachment of threonine to tRNA(Thr) in a two-step reaction: L-threonine is first activated by ATP to form Thr-AMP and then transferred to the acceptor end of tRNA(Thr). Also edits incorrectly charged L-seryl-tRNA(Thr). This is Threonine--tRNA ligase from Nitrosomonas europaea (strain ATCC 19718 / CIP 103999 / KCTC 2705 / NBRC 14298).